The sequence spans 248 residues: Large ribosomal subunit protein uL4 (248 aa).

Disordered regions lie at residues 48–96 and 210–248; these read GTHK…PVPR and AFSEDRDNPGTSLPKSPTPEDSSDATKARSSRHDDRTGA. Residues 233–248 are compositionally biased toward basic and acidic residues; it reads DATKARSSRHDDRTGA.

Belongs to the universal ribosomal protein uL4 family. In terms of assembly, part of the 50S ribosomal subunit.

In terms of biological role, one of the primary rRNA binding proteins, this protein initially binds near the 5'-end of the 23S rRNA. It is important during the early stages of 50S assembly. It makes multiple contacts with different domains of the 23S rRNA in the assembled 50S subunit and ribosome. Its function is as follows. Forms part of the polypeptide exit tunnel. In Tropheryma whipplei (strain Twist) (Whipple's bacillus), this protein is Large ribosomal subunit protein uL4.